The primary structure comprises 66 residues: DNA gyrase inhibitor YacG (66 aa).

Residues Cys9, Cys12, Cys28, and Cys32 each contribute to the Zn(2+) site. The interval 45–66 (HKIAGSEGSEDELYSGDLEPRH) is disordered.

It belongs to the DNA gyrase inhibitor YacG family. In terms of assembly, interacts with GyrB. The cofactor is Zn(2+).

Functionally, inhibits all the catalytic activities of DNA gyrase by preventing its interaction with DNA. Acts by binding directly to the C-terminal domain of GyrB, which probably disrupts DNA binding by the gyrase. The chain is DNA gyrase inhibitor YacG from Pseudomonas putida (strain ATCC 700007 / DSM 6899 / JCM 31910 / BCRC 17059 / LMG 24140 / F1).